Consider the following 312-residue polypeptide: Protoheme IX farnesyltransferase (312 aa).

The next 8 membrane-spanning stretches (helical) occupy residues 33–53 (VMLLVVFTALVGLIVSPVSIN), 54–74 (PLYGFLAILCIAVGGGGAGAL), 105–125 (FIFGMVLSILSVLIMGSFVNW), 126–146 (FAALFLAFTIFFYIVVYTIWL), 154–174 (IVIGGAAGAFPPMIGWAAATG), 181–201 (FLLFLIIFMWTPPHFWSLSLF), 243–263 (IIGFAGVFYGIFSTVLSIIFI), and 291–311 (FYLAAIFGILLIEFFVWCFII).

The protein belongs to the UbiA prenyltransferase family. Protoheme IX farnesyltransferase subfamily.

The protein localises to the cell inner membrane. It catalyses the reaction heme b + (2E,6E)-farnesyl diphosphate + H2O = Fe(II)-heme o + diphosphate. It functions in the pathway porphyrin-containing compound metabolism; heme O biosynthesis; heme O from protoheme: step 1/1. Converts heme B (protoheme IX) to heme O by substitution of the vinyl group on carbon 2 of heme B porphyrin ring with a hydroxyethyl farnesyl side group. This chain is Protoheme IX farnesyltransferase, found in Bartonella henselae (strain ATCC 49882 / DSM 28221 / CCUG 30454 / Houston 1) (Rochalimaea henselae).